The following is an 80-amino-acid chain: Translation initiation factor IF-1, chloroplastic (80 aa).

Positions 1–74 (MKEQKWIHEG…TRGRIIYRLR (74 aa)) constitute an S1-like domain.

It belongs to the IF-1 family. Component of the 30S ribosomal translation pre-initiation complex which assembles on the 30S ribosome in the order IF-2 and IF-3, IF-1 and N-formylmethionyl-tRNA(fMet); mRNA recruitment can occur at any time during PIC assembly.

The protein localises to the plastid. It localises to the chloroplast. Its function is as follows. One of the essential components for the initiation of protein synthesis. Stabilizes the binding of IF-2 and IF-3 on the 30S subunit to which N-formylmethionyl-tRNA(fMet) subsequently binds. Helps modulate mRNA selection, yielding the 30S pre-initiation complex (PIC). Upon addition of the 50S ribosomal subunit IF-1, IF-2 and IF-3 are released leaving the mature 70S translation initiation complex. The chain is Translation initiation factor IF-1, chloroplastic from Illicium parviflorum (Yellow anise tree).